Consider the following 199-residue polypeptide: NADH-quinone oxidoreductase subunit C (199 aa).

This sequence belongs to the complex I 30 kDa subunit family. As to quaternary structure, NDH-1 is composed of 14 different subunits. Subunits NuoB, C, D, E, F, and G constitute the peripheral sector of the complex.

The protein resides in the cell inner membrane. It carries out the reaction a quinone + NADH + 5 H(+)(in) = a quinol + NAD(+) + 4 H(+)(out). In terms of biological role, NDH-1 shuttles electrons from NADH, via FMN and iron-sulfur (Fe-S) centers, to quinones in the respiratory chain. The immediate electron acceptor for the enzyme in this species is believed to be ubiquinone. Couples the redox reaction to proton translocation (for every two electrons transferred, four hydrogen ions are translocated across the cytoplasmic membrane), and thus conserves the redox energy in a proton gradient. The chain is NADH-quinone oxidoreductase subunit C from Leptothrix cholodnii (strain ATCC 51168 / LMG 8142 / SP-6) (Leptothrix discophora (strain SP-6)).